Consider the following 76-residue polypeptide: Sec-independent protein translocase protein TatA (76 aa).

The chain crosses the membrane as a helical span at residues M1–G21. A disordered region spans residues D45–A76.

This sequence belongs to the TatA/E family. As to quaternary structure, the Tat system comprises two distinct complexes: a TatABC complex, containing multiple copies of TatA, TatB and TatC subunits, and a separate TatA complex, containing only TatA subunits. Substrates initially bind to the TatABC complex, which probably triggers association of the separate TatA complex to form the active translocon.

It is found in the cell inner membrane. Part of the twin-arginine translocation (Tat) system that transports large folded proteins containing a characteristic twin-arginine motif in their signal peptide across membranes. TatA could form the protein-conducting channel of the Tat system. In Pasteurella multocida (strain Pm70), this protein is Sec-independent protein translocase protein TatA.